The following is a 321-amino-acid chain: Tetraacyldisaccharide 4'-kinase (321 aa).

S54–T61 lines the ATP pocket.

Belongs to the LpxK family.

It carries out the reaction a lipid A disaccharide + ATP = a lipid IVA + ADP + H(+). Its pathway is glycolipid biosynthesis; lipid IV(A) biosynthesis; lipid IV(A) from (3R)-3-hydroxytetradecanoyl-[acyl-carrier-protein] and UDP-N-acetyl-alpha-D-glucosamine: step 6/6. Transfers the gamma-phosphate of ATP to the 4'-position of a tetraacyldisaccharide 1-phosphate intermediate (termed DS-1-P) to form tetraacyldisaccharide 1,4'-bis-phosphate (lipid IVA). The chain is Tetraacyldisaccharide 4'-kinase from Rickettsia africae (strain ESF-5).